An 833-amino-acid polypeptide reads, in one-letter code: Zinc phosphodiesterase ELAC protein 2 homolog (833 aa).

The transit peptide at 1-19 directs the protein to the mitochondrion; that stretch reads MLGAIARKTVENRILVSRH. A compositionally biased stretch (pro residues) spans 624–646; sequence LTPPGSPGGPPGKRPRLPSPHLP. Residues 624–652 form a disordered region; the sequence is LTPPGSPGGPPGKRPRLPSPHLPPSRDVL.

Belongs to the RNase Z family. In terms of assembly, homodimer. The cofactor is Zn(2+). As to expression, highly expressed in the germline.

It is found in the mitochondrion. The protein resides in the nucleus. The catalysed reaction is Endonucleolytic cleavage of RNA, removing extra 3' nucleotides from tRNA precursor, generating 3' termini of tRNAs. A 3'-hydroxy group is left at the tRNA terminus and a 5'-phosphoryl group is left at the trailer molecule.. Functionally, zinc phosphodiesterase, which displays some tRNA 3'-processing endonuclease activity. Probably involved in tRNA maturation, by removing a 3'-trailer from precursor tRNA. Involved in germline proliferation. May be required for both mitosis and meiosis in germ cells. In terms of biological role, does not regulate the mitochondrial unfolded protein response following mitochondrial stress. Its function is as follows. Plays a role in mitochondrial unfolded protein response. Upon mitochondrial stress is exported from the nucleus where its tRNA endonuclease activity is negatively regulated. In response to mitochondrial stress, might be involved in activating a transcriptional response in an ATFS-1- and DVE-1-dependent manner. May play a role in negatively regulating the mitochondrial membrane potential. The sequence is that of Zinc phosphodiesterase ELAC protein 2 homolog from Caenorhabditis elegans.